The primary structure comprises 373 residues: MATSASSHLNKGIKQMYMSLPQGEKVQAMYIWVDGTGEGLRCKTRTLDCEPKCVEELPEWNFDGSSTFQSEGSNSDMYLHPVAMFRDPFRKDPNKLVLCEVFKYNRKPAETNLRHICKRIMDMVSNQHPWFGMEQEYTLMGTDGHPFGWPSNGFPGPQGPYYCGVGADKAYGRDIVEAHYRACLYAGVKITGTNAEVMPAQWEFQIGPCEGIRMGDHLWIARFILHRVCEDFGVIATFDPKPIPGNWNGAGCHTNFSTKAMREENGLKCIEEAIDKLSKRHQYHIRAYDPKGGLDNARRLTGFHETSNINDFSAGVANRGASIRIPRTVGQEKKGYFEDRRPSANCDPYAVTEAIVRTCLLNETGDEPFQYKN.

Residue Ala2 is modified to N-acetylalanine. The required for glutamine-induced ubiquitination by CRL4(CRBN) and proteasomal degradation stretch occupies residues 2-25 (ATSASSHLNKGIKQMYMSLPQGEK). Lys11 and Lys14 each carry N6-acetyllysine. The GS beta-grasp domain occupies 24–106 (EKVQAMYIWV…VLCEVFKYNR (83 aa)). Tyr104 is subject to Phosphotyrosine. The GS catalytic domain occupies 113-373 (LRHICKRIMD…TGDEPFQYKN (261 aa)). Residue Glu134 participates in ATP binding. Mn(2+) is bound by residues Glu134, Glu136, Glu196, and Glu203. 203–208 (EFQIGP) serves as a coordination point for ATP. Position 246 to 247 (246 to 247 (NW)) interacts with L-glutamate. His253 is a Mn(2+) binding site. Residues 255–257 (NFS), Arg319, and Arg324 contribute to the ATP site. Arg319 serves as a coordination point for L-glutamate. 336–338 (YFE) contributes to the ADP binding site. Residue Glu338 coordinates Mn(2+). L-glutamate is bound at residue Arg340. A Phosphoserine modification is found at Ser343.

It belongs to the glutamine synthetase family. Decamer; composed of two pentamers. Interacts with PALMD. Interacts with RHOJ. Interacts with BEST2; this interaction tethers a fraction of GLUL to the membrane, causing a decrease of cytosolic glutamine synthase (GS) activity and inhibits the chloride channel activity of BEST2 by affecting the gating at the aperture in the absence of intracellular glutamate. Mg(2+) serves as cofactor. The cofactor is Mn(2+). In terms of processing, acetylated by EP300/p300; acetylation is stimulated by increased glutamine levels and promotes ubiquitin-mediated proteasomal degradation. Palmitoylated; undergoes autopalmitoylation. Post-translationally, ubiquitinated by ZNRF1. Ubiquitinated by the DCX (DDB1-CUL4-X-box) E3 ubiquitin-protein ligase complex called CRL4(CRBN), leading to proteasomal degradation. As to expression, expressed in microvascular endothelial cells.

It is found in the cytoplasm. The protein localises to the cytosol. The protein resides in the microsome. It localises to the mitochondrion. Its subcellular location is the cell membrane. The enzyme catalyses L-glutamate + NH4(+) + ATP = L-glutamine + ADP + phosphate + H(+). It catalyses the reaction L-cysteinyl-[protein] + hexadecanoyl-CoA = S-hexadecanoyl-L-cysteinyl-[protein] + CoA. Glutamine synthetase activity is inhibited by methionine sulfoximine (MSO). Its function is as follows. Glutamine synthetase that catalyzes the ATP-dependent conversion of glutamate and ammonia to glutamine. Its role depends on tissue localization: in the brain, it regulates the levels of toxic ammonia and converts neurotoxic glutamate to harmless glutamine, whereas in the liver, it is one of the enzymes responsible for the removal of ammonia. Plays a key role in ammonium detoxification during erythropoiesis: the glutamine synthetase activity is required to remove ammonium generated by porphobilinogen deaminase (HMBS) during heme biosynthesis to prevent ammonium accumulation and oxidative stress. Essential for proliferation of fetal skin fibroblasts. Independently of its glutamine synthetase activity, required for endothelial cell migration during vascular development. Involved in angiogenesis by regulating membrane localization and activation of the GTPase RHOJ, possibly by promoting RHOJ palmitoylation. May act as a palmitoyltransferase for RHOJ: able to autopalmitoylate and then transfer the palmitoyl group to RHOJ. Plays a role in ribosomal 40S subunit biogenesis. Through the interaction with BEST2, inhibits BEST2 channel activity by affecting the gating at the aperture in the absence of intracellular L-glutamate, but sensitizes BEST2 to intracellular L-glutamate, which promotes the opening of BEST2 and thus relieves its inhibitory effect on BEST2. This Mus musculus (Mouse) protein is Glutamine synthetase.